The sequence spans 167 residues: Small ribosomal subunit protein mS25 (167 aa).

It belongs to the mitochondrion-specific ribosomal protein mS25 family. Component of the mitochondrial ribosome small subunit (28S) which comprises a 12S rRNA and about 30 distinct proteins.

Its subcellular location is the mitochondrion. This is Small ribosomal subunit protein mS25 (mRpS25) from Drosophila melanogaster (Fruit fly).